Here is a 37-residue protein sequence, read N- to C-terminus: Cytochrome b6-f complex subunit 5 (37 aa).

Residues 5-25 (LLSGIVLGLIPVTLAGLFVTA) form a helical membrane-spanning segment.

Belongs to the PetG family. In terms of assembly, the 4 large subunits of the cytochrome b6-f complex are cytochrome b6, subunit IV (17 kDa polypeptide, PetD), cytochrome f and the Rieske protein, while the 4 small subunits are PetG, PetL, PetM and PetN. The complex functions as a dimer.

The protein resides in the plastid. Its subcellular location is the chloroplast thylakoid membrane. Component of the cytochrome b6-f complex, which mediates electron transfer between photosystem II (PSII) and photosystem I (PSI), cyclic electron flow around PSI, and state transitions. PetG is required for either the stability or assembly of the cytochrome b6-f complex. The protein is Cytochrome b6-f complex subunit 5 of Chlorokybus atmophyticus (Soil alga).